The sequence spans 1427 residues: Coiled-coil domain-containing protein 144A (1427 aa).

Positions 1 to 11 (MASWGGEKRGG) are enriched in basic and acidic residues. 5 disordered regions span residues 1-32 (MASW…VGSQ), 87-189 (AARS…LTER), 213-261 (LPEN…CDRE), 453-485 (NMNQ…DSDR), and 528-586 (EEEM…EVKN). Polar residues-rich tracts occupy residues 129 to 150 (PESL…LSDE) and 167 to 178 (VSPSMPENQSAT). Positions 224-234 (QDSELTSEEEQ) are enriched in acidic residues. Residues 453–467 (NMNQNSDSGSTNNYK) show a composition bias toward polar residues. Positions 490–545 (YLHEELQQDMQKFKNEVNTLEEEFLALKKEDVQLHKDVEEEMEKHRSNSTELSGTL) form a coiled coil. Over residues 528-537 (EEEMEKHRSN) the composition is skewed to basic and acidic residues. A compositionally biased stretch (low complexity) spans 543 to 552 (GTLTDGTTVG). The span at 563–584 (PRKENGEHDRPADKTSNEKNEV) shows a compositional bias: basic and acidic residues. 2 coiled-coil regions span residues 648–1129 (LLKL…DLTE) and 1155–1309 (FSMK…TQLT).

Belongs to the CCDC144 family.

In terms of biological role, may play a role in preventing the formation of kidney stones through inhibition of calcium oxalate monohydrate (COM) crystallization, attenuating COM-induced apoptotic injury to renal epithelial cells. May exhibit antilithiatic (preventing the formation of kidney stones) activity through crystal binding, hindering the crystal attachment to renal epithelial cells, a pre-requisite to initiate inflammatory response. This is Coiled-coil domain-containing protein 144A (CCDC144A) from Homo sapiens (Human).